Reading from the N-terminus, the 424-residue chain is Protein shisa-9 (424 aa).

Residues 1–23 form the signal peptide; that stretch reads MRRVLRLLLGCFLTELCARVCRA. At 24-149 the chain is on the extracellular side; sequence QERAGHGQLA…DPLHDPTKDK (126 aa). Residues asparagine 45, asparagine 89, and asparagine 116 are each glycosylated (N-linked (GlcNAc...) asparagine). Residues 150–170 traverse the membrane as a helical segment; the sequence is TNLIVYIICGVVAVMVLVGIF. Residues 171 to 424 lie on the Cytoplasmic side of the membrane; the sequence is TKLGLEKAHR…ITNSKTEVTV (254 aa). The interval 333-424 is disordered; that stretch reads PRAFSPEHGP…ITNSKTEVTV (92 aa). A compositionally biased stretch (polar residues) spans 414 to 424; the sequence is FITNSKTEVTV.

It belongs to the shisa family. SHISA9 subfamily. As to quaternary structure, component of some AMPA receptors (ionotropic glutamate receptors) complex, at least composed of some AMPA receptor (GRIA1, GRIA2 and/or GRIA3), CACNG2 and SHISA9, as well as low level of DLG4.

The protein localises to the cell projection. It is found in the dendritic spine membrane. The protein resides in the synapse. Functionally, regulator of short-term neuronal synaptic plasticity in the dentate gyrus. Associates with AMPA receptors (ionotropic glutamate receptors) in synaptic spines and promotes AMPA receptor desensitization at excitatory synapses. The protein is Protein shisa-9 (SHISA9) of Homo sapiens (Human).